Consider the following 159-residue polypeptide: UPF0225 protein plu2503 (159 aa).

It belongs to the UPF0225 family.

The chain is UPF0225 protein plu2503 from Photorhabdus laumondii subsp. laumondii (strain DSM 15139 / CIP 105565 / TT01) (Photorhabdus luminescens subsp. laumondii).